Here is a 450-residue protein sequence, read N- to C-terminus: Keratin, type I cytoskeletal 25 (450 aa).

The tract at residues 1-24 (MSLRLPSGSRRASPRPTTGSLRLS) is disordered. The segment at 1-78 (MSLRLPSGSR…MNEGGLLSGN (78 aa)) is head. Residues 79-114 (EKVTMQNLNDRLASYLENVRALEEANADLEQKIKGW) are coil 1A. The region spanning 79-394 (EKVTMQNLND…LLIGGDDGAC (316 aa)) is the IF rod domain. A linker 1 region spans residues 115 to 136 (YEKFGPGSCRGLDHDYSRYFPI). The tract at residues 137-228 (IEDLKNQIIA…KNHKEEMQVL (92 aa)) is coil 1B. The linker 12 stretch occupies residues 229–251 (QCAAGGNVNVEMNAAPGVDLTVL). The tract at residues 252-390 (LNNMRAEYEA…ETYCLLIGGD (139 aa)) is coil 2. The tail stretch occupies residues 391–450 (DGACKSGGYKSKDYAAGNMGNQMKDPIKAIVVKKVLEEVDQRSKILTTRLHSLEEKSQSN). S442 bears the Phosphoserine mark.

Belongs to the intermediate filament family. Heterodimer of a type I and a type II keratin. Heterodimer with type II keratin KRT5 leading to the formation of keratin intermediate filament (KIF) network. Interacts with KRT6A to form filaments.

It localises to the cytoplasm. Its function is as follows. Essential for the proper assembly of type I and type II keratin protein complexes and formation of keratin intermediate filaments in the inner root sheath (irs). Plays a role in the cytoskeleton organization. The protein is Keratin, type I cytoskeletal 25 of Capra hircus (Goat).